Consider the following 233-residue polypeptide: Ras-related protein Rab-20 (233 aa).

The GTP site is built by Gly17, Lys18, Thr19, Asp32, and Thr36. A Mg(2+)-binding site is contributed by Thr19. Short sequence motifs (switch) lie at residues 28–41 and 55–72; these read RRFP…GGAF and DTAG…YCRG. Positions 36 and 55 each coordinate Mg(2+). Gly58, Asn113, Lys114, and Asp116 together coordinate GTP. The span at 119-130 shows a compositional bias: basic and acidic residues; the sequence is SERDTEGGEKEG. The interval 119–138 is disordered; sequence SERDTEGGEKEGPASGKVGS. GTP-binding residues include Ala183 and Lys184. 2 S-geranylgeranyl cysteine lipidation sites follow: Cys231 and Cys232.

The protein belongs to the small GTPase superfamily. Rab family. It depends on Mg(2+) as a cofactor. As to expression, present in a variety of tissues, but not in brain.

Its subcellular location is the cytoplasmic vesicle. It is found in the phagosome. The protein localises to the phagosome membrane. The protein resides in the golgi apparatus. It catalyses the reaction GTP + H2O = GDP + phosphate + H(+). Its activity is regulated as follows. Regulated by guanine nucleotide exchange factors (GEFs) which promote the exchange of bound GDP for free GTP. Regulated by GTPase activating proteins (GAPs) which increase the GTP hydrolysis activity. Inhibited by GDP dissociation inhibitors (GDIs). Functionally, plays a role in apical endocytosis/recycling. Plays a role in the maturation and acidification of phagosomes that engulf pathogens, such as S.aureus and Mycobacterium. Plays a role in the fusion of phagosomes with lysosomes. This chain is Ras-related protein Rab-20, found in Mus musculus (Mouse).